The following is a 361-amino-acid chain: Beta-hexosaminidase (361 aa).

Substrate contacts are provided by residues Asp-69, Arg-77, Arg-144, and 174-175; that span reads KH. His-187 functions as the Proton donor/acceptor in the catalytic mechanism. The active-site Nucleophile is the Asp-258.

The protein belongs to the glycosyl hydrolase 3 family. NagZ subfamily.

It localises to the cytoplasm. It carries out the reaction Hydrolysis of terminal non-reducing N-acetyl-D-hexosamine residues in N-acetyl-beta-D-hexosaminides.. The protein operates within cell wall biogenesis; peptidoglycan recycling. In terms of biological role, plays a role in peptidoglycan recycling by cleaving the terminal beta-1,4-linked N-acetylglucosamine (GlcNAc) from peptide-linked peptidoglycan fragments, giving rise to free GlcNAc, anhydro-N-acetylmuramic acid and anhydro-N-acetylmuramic acid-linked peptides. The chain is Beta-hexosaminidase from Neisseria meningitidis serogroup B (strain ATCC BAA-335 / MC58).